A 453-amino-acid chain; its full sequence is tRNA modification GTPase MnmE (453 aa).

Positions 22, 79, and 119 each coordinate (6S)-5-formyl-5,6,7,8-tetrahydrofolate. One can recognise a TrmE-type G domain in the interval G215 to G376. Residue N225 coordinates K(+). GTP-binding positions include N225–S230, T244–T250, D269–G272, and N334–D337. Position 229 (S229) interacts with Mg(2+). Residues T244, I246, and T249 each contribute to the K(+) site. T250 serves as a coordination point for Mg(2+). K453 serves as a coordination point for (6S)-5-formyl-5,6,7,8-tetrahydrofolate.

The protein belongs to the TRAFAC class TrmE-Era-EngA-EngB-Septin-like GTPase superfamily. TrmE GTPase family. As to quaternary structure, homodimer. Heterotetramer of two MnmE and two MnmG subunits. Requires K(+) as cofactor.

The protein localises to the cytoplasm. In terms of biological role, exhibits a very high intrinsic GTPase hydrolysis rate. Involved in the addition of a carboxymethylaminomethyl (cmnm) group at the wobble position (U34) of certain tRNAs, forming tRNA-cmnm(5)s(2)U34. This is tRNA modification GTPase MnmE from Vibrio cholerae serotype O1 (strain ATCC 39315 / El Tor Inaba N16961).